Reading from the N-terminus, the 1912-residue chain is MASGLGSPSPCSAGSEEEDMDALLNNSLPPPHPENEEDPEEDLSETETPKLKKKKKPKKPRDPKIPKSKRQKKERMLLCRQLGDSSGEGPEFVEEEEEVALRSDSEGSDYTPGKKKKKKLGPKKEKKSKSKRKEEEEEEDDDDDSKEPKSSAQLLEDWGMEDIDHVFSEEDYRTLTNYKAFSQFVRPLIAAKNPKIAVSKMMMVLGAKWREFSTNNPFKGSSGASVAAAAAAAVAVVESMVTATEVAPPPPPVEVPIRKAKTKEGKGPNARRKPKGSPRVPDAKKPKPKKVAPLKIKLGGFGSKRKRSSSEDDDLDVESDFDDASINSYSVSDGSTSRSSRSRKKLRTTKKKKKGEEEVTAVDGYETDHQDYCEVCQQGGEIILCDTCPRAYHMVCLDPDMEKAPEGKWSCPHCEKEGIQWEAKEDNSEGEEILEEVGGDLEEEDDHHMEFCRVCKDGGELLCCDTCPSSYHIHCLNPPLPEIPNGEWLCPRCTCPALKGKVQKILIWKWGQPPSPTPVPRPPDADPNTPSPKPLEGRPERQFFVKWQGMSYWHCSWVSELQLELHCQVMFRNYQRKNDMDEPPSGDFGGDEEKSRKRKNKDPKFAEMEERFYRYGIKPEWMMIHRILNHSVDKKGHVHYLIKWRDLPYDQASWESEDVEIQDYDLFKQSYWNHRELMRGEEGRPGKKLKKVKLRKLERPPETPTVDPTVKYERQPEYLDATGGTLHPYQMEGLNWLRFSWAQGTDTILADEMGLGKTVQTAVFLYSLYKEGHSKGPFLVSAPLSTIINWEREFEMWAPDMYVVTYVGDKDSRAIIRENEFSFEDNAIRGGKKASRMKKEASVKFHVLLTSYELITIDMAILGSIDWACLIVDEAHRLKNNQSKFFRVLNGYSLQHKLLLTGTPLQNNLEELFHLLNFLTPERFHNLEGFLEEFADIAKEDQIKKLHDMLGPHMLRRLKADVFKNMPSKTELIVRVELSPMQKKYYKYILTRNFEALNARGGGNQVSLLNVVMDLKKCCNHPYLFPVAAMEAPKMPNGMYDGSALIRASGKLLLLQKMLKNLKEGGHRVLIFSQMTKMLDLLEDFLEHEGYKYERIDGGITGNMRQEAIDRFNAPGAQQFCFLLSTRAGGLGINLATADTVIIYDSDWNPHNDIQAFSRAHRIGQNKKVMIYRFVTRASVEERITQVAKKKMMLTHLVVRPGLGSKTGSMSKQELDDILKFGTEELFKDEATDGGGDNKEGEDSSVIHYDDKAIERLLDRNQDETEDTELQGMNEYLSSFKVAQYVVREEEMGEEEEVEREIIKQEESVDPDYWEKLLRHHYEQQQEDLARNLGKGKRIRKQVNYNDGSQEDRDWQDDQSDNQSDYSVASEEGDEDFDERSEAPRRPSRKGLRNDKDKPLPPLLARVGGNIEVLGFNARQRKAFLNAIMRYGMPPQDAFTTQWLVRDLRGKSEKEFKAYVSLFMRHLCEPGADGAETFADGVPREGLSRQHVLTRIGVMSLIRKKVQEFEHVNGRWSMPELAEVEENKKMSQPGSPSPKTPTPSTPGDTQPNTPAPVPPAEDGIKIEENSLKEEESIEGEKEVKSTAPETAIECTQAPAPASEDEKVVVEPPEGEEKVEKAEVKERTEEPMETEPKGAADVEKVEEKSAIDLTPIVVEDKEEKKEEEEKKEVMLQNGETPKDLNDEKQKKNIKQRFMFNIADGGFTELHSLWQNEERAATVTKKTYEIWHRRHDYWLLAGIINHGYARWQDIQNDPRYAILNEPFKGEMNRGNFLEIKNKFLARRFKLLEQALVIEEQLRRAAYLNMSEDPSHPSMALNTRFAEVECLAESHQHLSKESMAGNKPANAVLHKVLKQLEELLSDMKADVTRLPATIARIPPVAVRLQMSERNILSRLANRAPEPTPQQVAQQQ.

The interval 1 to 157 is disordered; the sequence is MASGLGSPSP…PKSSAQLLED (157 aa). Positions 35–45 are enriched in acidic residues; it reads NEEDPEEDLSE. Ser44 carries the phosphoserine modification. Positions 113–131 are enriched in basic residues; the sequence is GKKKKKKLGPKKEKKSKSK. A Glycyl lysine isopeptide (Lys-Gly) (interchain with G-Cter in SUMO2) cross-link involves residue Lys133. Residues 135–145 show a composition bias toward acidic residues; the sequence is EEEEEDDDDDS. Residues Lys146, Lys179, and Lys297 each participate in a glycyl lysine isopeptide (Lys-Gly) (interchain with G-Cter in SUMO2) cross-link. Residues 243–360 form a disordered region; sequence ATEVAPPPPP…KKKKGEEEVT (118 aa). Positions 295–298 match the KIKL motif; the sequence is KIKL. Ser303 bears the Phosphoserine mark. Lys304 participates in a covalent cross-link: Glycyl lysine isopeptide (Lys-Gly) (interchain with G-Cter in SUMO2). Residues Ser308, Ser309, Ser310, and Ser319 each carry the phosphoserine modification. Over residues 311-323 the composition is skewed to acidic residues; sequence EDDDLDVESDFDD. Residues 340–353 are compositionally biased toward basic residues; that stretch reads SRSRKKLRTTKKKK. Thr367 is modified (phosphothreonine). The PHD-type 1 zinc finger occupies 370-417; sequence QDYCEVCQQGGEIILCDTCPRAYHMVCLDPDMEKAPEGKWSCPHCEKE. A Phosphoserine modification is found at Ser428. The segment at 449–496 adopts a PHD-type 2 zinc-finger fold; it reads MEFCRVCKDGGELLCCDTCPSSYHIHCLNPPLPEIPNGEWLCPRCTCP. Residues 494–594 enclose the Chromo 1 domain; it reads TCPALKGKVQ…SGDFGGDEEK (101 aa). 2 disordered regions span residues 510–537 and 578–603; these read WGQP…PLEG and NDMD…NKDP. A compositionally biased stretch (pro residues) spans 513-522; it reads PPSPTPVPRP. Ser515 carries the phosphoserine modification. 2 positions are modified to phosphothreonine: Thr517 and Thr529. Residue Ser531 is modified to Phosphoserine. Glycyl lysine isopeptide (Lys-Gly) (interchain with G-Cter in SUMO2) cross-links involve residues Lys618 and Lys696. One can recognise a Chromo 2 domain in the interval 622 to 697; it reads MMIHRILNHS…KLKKVKLRKL (76 aa). Thr703 carries the phosphothreonine modification. Lys711 is covalently cross-linked (Glycyl lysine isopeptide (Lys-Gly) (interchain with G-Cter in SUMO1); alternate). Lys711 is covalently cross-linked (Glycyl lysine isopeptide (Lys-Gly) (interchain with G-Cter in SUMO2); alternate). The region spanning 738–922 is the Helicase ATP-binding domain; that stretch reads RFSWAQGTDT…FHLLNFLTPE (185 aa). 751 to 758 is a binding site for ATP; the sequence is DEMGLGKT. The short motif at 873-876 is the DEAH box element; sequence DEAH. The Helicase C-terminal domain occupies 1054–1203; sequence LLQKMLKNLK…LTHLVVRPGL (150 aa). The residue at position 1209 (Ser1209) is a Phosphoserine. Residues Lys1212, Lys1228, Lys1239, and Lys1304 each participate in a glycyl lysine isopeptide (Lys-Gly) (interchain with G-Cter in SUMO2) cross-link. Ser1308, Ser1349, and Ser1370 each carry phosphoserine. Disordered stretches follow at residues 1344-1401 and 1525-1562; these read NYND…KPLP and EENK…PAED. Glycyl lysine isopeptide (Lys-Gly) (interchain with G-Cter in SUMO2) cross-links involve residues Lys1528 and Lys1529. Phosphoserine occurs at positions 1531, 1535, and 1537. The segment covering 1535 to 1544 has biased composition (pro residues); sequence SPSPKTPTPS. Residues Thr1542, Thr1549, and Thr1553 each carry the phosphothreonine modification. A Glycyl lysine isopeptide (Lys-Gly) (interchain with G-Cter in SUMO2) cross-link involves residue Lys1565. Residue Ser1570 is modified to Phosphoserine. Residues 1570 to 1584 are compositionally biased toward basic and acidic residues; sequence SLKEEESIEGEKEVK. Disordered regions lie at residues 1570–1589 and 1594–1644; these read SLKE…TAPE and CTQA…VEKV. Lys1572 is covalently cross-linked (Glycyl lysine isopeptide (Lys-Gly) (interchain with G-Cter in SUMO2)). Residue Ser1576 is modified to Phosphoserine. The interval 1577-1912 is required for interaction with PCNT; it reads IEGEKEVKST…PTPQQVAQQQ (336 aa). A Glycyl lysine isopeptide (Lys-Gly) (interchain with G-Cter in SUMO2) cross-link involves residue Lys1584. Residue Ser1602 is modified to Phosphoserine. A compositionally biased stretch (basic and acidic residues) spans 1603-1644; it reads EDEKVVVEPPEGEEKVEKAEVKERTEEPMETEPKGAADVEKV. Residues Lys1606, Lys1617, and Lys1636 each participate in a glycyl lysine isopeptide (Lys-Gly) (interchain with G-Cter in SUMO2) cross-link. A Glycyl lysine isopeptide (Lys-Gly) (interchain with G-Cter in SUMO2); alternate cross-link involves residue Lys1643. At Lys1643 the chain carries N6-acetyllysine; alternate. A Glycyl lysine isopeptide (Lys-Gly) (interchain with G-Cter in SUMO2) cross-link involves residue Lys1647. The residue at position 1653 (Thr1653) is a Phosphothreonine. Residues Lys1660 and Lys1670 each participate in a glycyl lysine isopeptide (Lys-Gly) (interchain with G-Cter in SUMO2) cross-link. Thr1679 is modified (phosphothreonine). Glycyl lysine isopeptide (Lys-Gly) (interchain with G-Cter in SUMO2) cross-links involve residues Lys1687 and Lys1865.

This sequence belongs to the SNF2/RAD54 helicase family. As to quaternary structure, component of the nucleosome remodeling and deacetylase (NuRD) repressor complex, composed of core proteins MTA1, MTA2, MTA3, RBBP4, RBBP7, HDAC1, HDAC2, MBD2, MBD3, and peripherally associated proteins CDK2AP1, CDK2AP2, GATAD2A, GATAD2B, CHD3, CHD4 and CHD5. The exact stoichiometry of the NuRD complex is unknown, and some subunits such as MBD2 and MBD3, GATAD2A and GATAD2B, and CHD3, CHD4 and CHD5 define mutually exclusive NuRD complexes. Interacts with IKFZ1; the interaction is direct and when in part of the NuRD complex. Part of a complex containing ATR and HDAC2. Interacts with HDAC2; the interaction is direct. Interacts with the cohesin complex component RAD21; the interaction is direct. Interacts with the ISWI chromatin remodeling complex component SMARCA5; the interaction is direct. Interacts with ZGPAT; the interaction is direct. Interacts with ZMYND8; the interaction is direct, appears to occur with monomeric ZMYND8, and is increased following DNA damage. Interacts with BCL6. Interacts with BRD4. Interacts with CBX1. Interacts with CBX3. Interacts with CBX5. Interacts with GATAD2A. Interacts with HDAC1. Interacts with KLF1; the interaction depends on sumoylation of KLF1, and leads to its transcriptional repression. Interacts with MTA1. Interacts with PCNT. Interacts with RBBP7. Interacts with SETX. Interacts with TRIM27. Interacts with histone H3. Interacts with histone H4. Does not interact with PWWP2A. Does not interact with PWWP2B. Interacts (via KIKL motif) with BRD3 (via NET domain). The cofactor is Zn(2+). Widely expressed.

The protein localises to the nucleus. It is found in the cytoplasm. Its subcellular location is the cytoskeleton. It localises to the microtubule organizing center. The protein resides in the centrosome. The catalysed reaction is ATP + H2O = ADP + phosphate + H(+). Functionally, ATP-dependent chromatin-remodeling factor that binds and distorts nucleosomal DNA. Acts as a component of the histone deacetylase NuRD complex which participates in the remodeling of chromatin. Localizes to acetylated damaged chromatin in a ZMYND8-dependent manner, to promote transcriptional repression and double-strand break repair by homologous recombination. Involved in neurogenesis. The protein is Chromodomain-helicase-DNA-binding protein 4 (CHD4) of Homo sapiens (Human).